An 89-amino-acid chain; its full sequence is Probable Fe(2+)-trafficking protein (89 aa).

This sequence belongs to the Fe(2+)-trafficking protein family.

Could be a mediator in iron transactions between iron acquisition and iron-requiring processes, such as synthesis and/or repair of Fe-S clusters in biosynthetic enzymes. The protein is Probable Fe(2+)-trafficking protein of Acinetobacter baumannii (strain AB0057).